The sequence spans 123 residues: Nitrogen regulatory protein GlnK2 (123 aa).

Residues 38-40 and serine 49 contribute to the ATP site; that span reads SLT. Serine 49 contacts ADP. Residue tyrosine 62 is modified to O-UMP-tyrosine. ATP contacts are provided by residues valine 75, 98–101, and arginine 114; that span reads GDGK. 98 to 101 provides a ligand contact to ADP; the sequence is GDGK. 98–101 is a binding site for AMP; that stretch reads GDGK.

This sequence belongs to the P(II) protein family. In terms of assembly, homotrimer. Interacts with the glutamine synthetase 3 (GS3) in the presence of 2-oxoglutarate. Interacts in vitro with Amt1 after ammonium shock. May also interact with Amt2. In terms of processing, uridylylated on Tyr-62.

It is found in the cytoplasm. With respect to regulation, binds the effectors ADP and ATP. Also binds AMP with high affinity, raising the possibility that AMP could be an important PII effector, at least in archaea. The change in the ATP/AMP ratio may be more relevant for describing the energy status in the cells than the ATP/ADP ratio alone. Its function is as follows. Involved in the regulation of nitrogen metabolism. Regulates the activity of its targets by protein-protein interaction in response to the nitrogen status of the cell. Increases the activity of the glutamine synthetase 3 in the presence of 2-oxoglutarate. May regulate the activity of the ammonia channel Amt2 via direct interaction. The chain is Nitrogen regulatory protein GlnK2 from Haloferax mediterranei (strain ATCC 33500 / DSM 1411 / JCM 8866 / NBRC 14739 / NCIMB 2177 / R-4) (Halobacterium mediterranei).